The chain runs to 197 residues: Syndecan-4 (197 aa).

A signal peptide spans 1-19 (MPLPRAAFLLGLLLAAAAA). The Extracellular portion of the chain corresponds to 20–147 (ESVRETETMD…SIFERTEVLT (128 aa)). O-linked (Xyl...) (glycosaminoglycan) serine glycans are attached at residues S38, S65, and S67. N124 and N136 each carry an N-linked (GlcNAc...) asparagine glycan. The chain crosses the membrane as a helical span at residues 148 to 168 (ALIAGGAVGLLFAVFLILLLV). Residues 169–197 (YRMKKKDEGSYDLGKKPIYKKAPTNEFYA) lie on the Cytoplasmic side of the membrane.

It belongs to the syndecan proteoglycan family. As to quaternary structure, interacts with SDOS. Post-translationally, O-glycosylated; contains both chondroitin sulfate and heparan sulfate. Ser-38, Ser-65 and Ser-67 can all be modified by either chondroitin sulfate or heparan sulfate, and the protein exists in forms that contain only chondroitin sulfate, only heparan sulfate and both chondroitin sulfate and heparan sulfate.

The protein resides in the membrane. Cell surface proteoglycan which regulates exosome biogenesis in concert with SDCBP and PDCD6IP. This chain is Syndecan-4 (SDC4), found in Gallus gallus (Chicken).